The chain runs to 217 residues: Uridylate kinase (217 aa).

6 to 10 (KLSGR) is an ATP binding site. G38 contributes to the UMP binding site. Positions 39 and 43 each coordinate ATP. Residues D60 and 107-113 (FQPGQST) contribute to the UMP site. The ATP site is built by N134, Y139, and D142.

Belongs to the UMP kinase family. As to quaternary structure, homohexamer.

Its subcellular location is the cytoplasm. The enzyme catalyses UMP + ATP = UDP + ADP. It functions in the pathway pyrimidine metabolism; CTP biosynthesis via de novo pathway; UDP from UMP (UMPK route): step 1/1. Inhibited by UTP. Catalyzes the reversible phosphorylation of UMP to UDP. The chain is Uridylate kinase from Pyrobaculum islandicum (strain DSM 4184 / JCM 9189 / GEO3).